The primary structure comprises 294 residues: Protoheme IX farnesyltransferase (294 aa).

9 helical membrane passes run 8-28, 35-55, 81-101, 107-127, 133-153, 163-183, 209-226, 230-252, and 266-286; these read LTKP…FLIA, YSLF…GCVL, IFLN…FLFL, VLTI…YSLW, IYSI…GYCA, LMLL…IAIL, MVVY…FTVM, SYIF…FYGY, and FLLS…DHIL.

It belongs to the UbiA prenyltransferase family. Protoheme IX farnesyltransferase subfamily.

It is found in the cell inner membrane. The enzyme catalyses heme b + (2E,6E)-farnesyl diphosphate + H2O = Fe(II)-heme o + diphosphate. Its pathway is porphyrin-containing compound metabolism; heme O biosynthesis; heme O from protoheme: step 1/1. In terms of biological role, converts heme B (protoheme IX) to heme O by substitution of the vinyl group on carbon 2 of heme B porphyrin ring with a hydroxyethyl farnesyl side group. The protein is Protoheme IX farnesyltransferase of Blochmanniella pennsylvanica (strain BPEN).